Consider the following 216-residue polypeptide: Large ribosomal subunit protein uL3 (216 aa).

The interval Gly137–Pro158 is disordered.

It belongs to the universal ribosomal protein uL3 family. Part of the 50S ribosomal subunit. Forms a cluster with proteins L14 and L19.

One of the primary rRNA binding proteins, it binds directly near the 3'-end of the 23S rRNA, where it nucleates assembly of the 50S subunit. The protein is Large ribosomal subunit protein uL3 of Pseudarthrobacter chlorophenolicus (strain ATCC 700700 / DSM 12829 / CIP 107037 / JCM 12360 / KCTC 9906 / NCIMB 13794 / A6) (Arthrobacter chlorophenolicus).